Reading from the N-terminus, the 775-residue chain is Metal transporter CNNM4 (775 aa).

The Extracellular portion of the chain corresponds to 1-178; it reads MAPVGGGGRP…LLFMVEEPGR (178 aa). 2 N-linked (GlcNAc...) asparagine glycosylation sites follow: Asn85 and Asn122. Residues 178–358 form the CNNM transmembrane domain; it reads RFLPLWLHIL…EPYNDLVKEE (181 aa). The chain crosses the membrane as a helical span at residues 179–199; sequence FLPLWLHILLITVLLVLSGIF. The Cytoplasmic segment spans residues 200-240; that stretch reads SGLNLGLMALDPMELRIVQNCGTEKERRYARKIEPIRRKGN. The segment at residues 241 to 261 is an intramembrane region (helical); that stretch reads YLLCSLLLGNVLVNTSLTILL. At 262 to 264 the chain is on the cytoplasmic side; sequence DNL. Residues 265-285 form a helical membrane-spanning segment; it reads IGSGLMAVASSTIGIVIFGEI. At 286–293 the chain is on the extracellular side; sequence LPQALCSR. A helical membrane pass occupies residues 294–316; it reads HGLAVGANTILLTKFFMLLTFPL. At 317–775 the chain is on the cytoplasmic side; the sequence is SFPISKLLDF…LHKASHENAI (459 aa). CBS domains lie at 377–438 and 445–511; these read MTQL…CTPL and YNHP…ILDE. Phosphoserine is present on residues Ser660, Ser664, and Ser770.

It belongs to the ACDP family. In terms of assembly, interacts with COX11. Widely expressed. Highly expressed in heart.

It is found in the cell membrane. Functionally, probable metal transporter. The interaction with the metal ion chaperone COX11 suggests that it may play a role in sensory neuron functions. May play a role in biomineralization and retinal function. The sequence is that of Metal transporter CNNM4 (CNNM4) from Homo sapiens (Human).